The sequence spans 986 residues: Ephrin type-A receptor 4 (986 aa).

An N-terminal signal peptide occupies residues 1-19; the sequence is MAGIFYFALFSCLFGICDA. Over 20 to 547 the chain is Extracellular; sequence VTGSRVYPAN…RIIGDGANST (528 aa). One can recognise an Eph LBD domain in the interval 30–209; that stretch reads EVTLLDSRSV…FYKKCPLTVR (180 aa). N235, N340, and N408 each carry an N-linked (GlcNAc...) asparagine glycan. Fibronectin type-III domains follow at residues 328–439 and 440–537; these read PPSA…TNQA and APSS…TVPS. The N-linked (GlcNAc...) asparagine glycan is linked to N545. A helical transmembrane segment spans residues 548 to 569; sequence VLLVSVSGSVVLVVILIAAFVI. The Cytoplasmic portion of the chain corresponds to 570-986; the sequence is SRRRSKYSKA…QQMHGRMVPV (417 aa). Phosphotyrosine; by autocatalysis is present on residues Y596 and Y602. Residues 621–882 enclose the Protein kinase domain; it reads IKIEKVIGVG…QIVNMLDKLI (262 aa). Residues 627–635 and K653 each bind ATP; that span reads IGVGEFGEV. Residue D746 is the Proton acceptor of the active site. A phosphotyrosine; by autocatalysis mark is found at Y779 and Y928. Residues 911-975 form the SAM domain; sequence SAVVSVGDWL…LSSVQAMRTQ (65 aa). The PDZ-binding signature appears at 984–986; that stretch reads VPV.

Belongs to the protein kinase superfamily. Tyr protein kinase family. Ephrin receptor subfamily. As to quaternary structure, heterotetramer upon binding of the ligand. The heterotetramer is composed of an ephrin dimer and a receptor dimer. Oligomerization is probably required to induce biological responses. Interacts (phosphorylated at position Tyr-602) with FYN. Interacts with CDK5, CDK5R1 and NGEF; upon activation by EFNA1 induces NGEF phosphorylation by the kinase CDK5. Interacts with CHN1; effector of EPHA4 in axon guidance linking EPHA4 activation to RAC1 regulation. Interacts (via PDZ motif) with SIPA1L1 (via PDZ domain); controls neuronal morphology through regulation of the RAP1 (RAP1A or RAP1B) and RAP2 (RAP2A, RAP2B or RAP2C) GTPases. Forms a ternary complex composed of ADAM10, CADH1 and EPHA4; within the complex, CADH1 is cleaved by ADAM10 which disrupts adherens junctions. As to expression, ubiquitous.

It localises to the cell membrane. The protein localises to the cell projection. The protein resides in the axon. Its subcellular location is the dendrite. It is found in the postsynaptic density membrane. It localises to the early endosome. The protein localises to the cell junction. The protein resides in the adherens junction. It catalyses the reaction L-tyrosyl-[protein] + ATP = O-phospho-L-tyrosyl-[protein] + ADP + H(+). Functionally, receptor tyrosine kinase which binds membrane-bound ephrin family ligands residing on adjacent cells, leading to contact-dependent bidirectional signaling into neighboring cells. The signaling pathway downstream of the receptor is referred to as forward signaling while the signaling pathway downstream of the ephrin ligand is referred to as reverse signaling. Highly promiscuous, it has the unique property among Eph receptors to bind and to be physiologically activated by both GPI-anchored ephrin-A and transmembrane ephrin-B ligands including EFNA1 and EFNB3. Upon activation by ephrin ligands, modulates cell morphology and integrin-dependent cell adhesion through regulation of the Rac, Rap and Rho GTPases activity. Plays an important role in the development of the nervous system controlling different steps of axonal guidance including the establishment of the corticospinal projections. May also control the segregation of motor and sensory axons during neuromuscular circuit development. In addition to its role in axonal guidance plays a role in synaptic plasticity. Activated by EFNA1 phosphorylates CDK5 at 'Tyr-15' which in turn phosphorylates NGEF regulating RHOA and dendritic spine morphogenesis. In the nervous system, also plays a role in repair after injury preventing axonal regeneration and in angiogenesis playing a role in central nervous system vascular formation. Additionally, its promiscuity makes it available to participate in a variety of cell-cell signaling regulating for instance the development of the thymic epithelium. During development of the cochlear organ of Corti, regulates pillar cell separation by forming a ternary complex with ADAM10 and CADH1 which facilitates the cleavage of CADH1 by ADAM10 and disruption of adherens junctions. Phosphorylates CAPRIN1, promoting CAPRIN1-dependent formation of a membraneless compartment. This is Ephrin type-A receptor 4 (EPHA4) from Homo sapiens (Human).